Reading from the N-terminus, the 494-residue chain is Sulfate adenylyltransferase subunit 1 (494 aa).

The region spanning T28–T242 is the tr-type G domain. The tract at residues G37–S44 is G1. G37–S44 is a GTP binding site. The tract at residues G94–D98 is G2. Residues D115–G118 are G3. Residues D115–H119 and N170–D173 each bind GTP. A G4 region spans residues N170 to D173. A G5 region spans residues S207 to L209.

The protein belongs to the TRAFAC class translation factor GTPase superfamily. Classic translation factor GTPase family. CysN/NodQ subfamily. As to quaternary structure, heterodimer composed of CysD, the smaller subunit, and CysN.

The enzyme catalyses sulfate + ATP + H(+) = adenosine 5'-phosphosulfate + diphosphate. It functions in the pathway sulfur metabolism; hydrogen sulfide biosynthesis; sulfite from sulfate: step 1/3. In terms of biological role, with CysD forms the ATP sulfurylase (ATPS) that catalyzes the adenylation of sulfate producing adenosine 5'-phosphosulfate (APS) and diphosphate, the first enzymatic step in sulfur assimilation pathway. APS synthesis involves the formation of a high-energy phosphoric-sulfuric acid anhydride bond driven by GTP hydrolysis by CysN coupled to ATP hydrolysis by CysD. The sequence is that of Sulfate adenylyltransferase subunit 1 from Agrobacterium fabrum (strain C58 / ATCC 33970) (Agrobacterium tumefaciens (strain C58)).